We begin with the raw amino-acid sequence, 359 residues long: 3-dehydroquinate synthase (359 aa).

NAD(+)-binding positions include 106-110 (GVVGD), 130-131 (TS), K143, and K152. Residues E185, H246, and H263 each contribute to the Zn(2+) site.

The protein belongs to the sugar phosphate cyclases superfamily. Dehydroquinate synthase family. Requires Co(2+) as cofactor. Zn(2+) is required as a cofactor. It depends on NAD(+) as a cofactor.

It localises to the cytoplasm. It carries out the reaction 7-phospho-2-dehydro-3-deoxy-D-arabino-heptonate = 3-dehydroquinate + phosphate. It functions in the pathway metabolic intermediate biosynthesis; chorismate biosynthesis; chorismate from D-erythrose 4-phosphate and phosphoenolpyruvate: step 2/7. Catalyzes the conversion of 3-deoxy-D-arabino-heptulosonate 7-phosphate (DAHP) to dehydroquinate (DHQ). This chain is 3-dehydroquinate synthase, found in Clostridium kluyveri (strain ATCC 8527 / DSM 555 / NBRC 12016 / NCIMB 10680 / K1).